The chain runs to 285 residues: MHIIKTIKVLYREIKILKKSNKKIGLVPTMGNLHDGHIKLILLAKKYSDIIIVSIFINPMQFDNLSDLKNYPKTFMKDSIILKKYHVDILFFPHINEIYPNGIEHQTFVEVIKLSKILEGQSRPGHFRGVTTIITKLFNFIQPDFAFFGEKDYQQLLIIKILVKELNYMIKIISLPTIRLKNGLALSSRNNYLSSQENEIAPYLYKIIKKTCEKIIKEDDNIRPKIIHESKILLIKKGFSVDIFDIYDYKNLEHPSKKVKKVILLASVWLGNTRLIDNKKIILNY.

30–37 (MGNLHDGH) provides a ligand contact to ATP. Residue His-37 is the Proton donor of the active site. Position 61 (Gln-61) interacts with (R)-pantoate. Position 61 (Gln-61) interacts with beta-alanine. 149 to 152 (GEKD) serves as a coordination point for ATP. (R)-pantoate is bound at residue Gln-155. ATP-binding positions include Ile-178 and 186-189 (LSSR).

This sequence belongs to the pantothenate synthetase family. In terms of assembly, homodimer.

The protein resides in the cytoplasm. The catalysed reaction is (R)-pantoate + beta-alanine + ATP = (R)-pantothenate + AMP + diphosphate + H(+). The protein operates within cofactor biosynthesis; (R)-pantothenate biosynthesis; (R)-pantothenate from (R)-pantoate and beta-alanine: step 1/1. In terms of biological role, catalyzes the condensation of pantoate with beta-alanine in an ATP-dependent reaction via a pantoyl-adenylate intermediate. The chain is Pantothenate synthetase from Buchnera aphidicola subsp. Acyrthosiphon pisum (strain Tuc7).